We begin with the raw amino-acid sequence, 220 residues long: Inner membrane-spanning protein YciB (220 aa).

6 helical membrane passes run 20–40, 57–77, 86–106, 123–143, 156–176, and 187–207; these read EVPP…FFFA, IGAP…IALA, LPIM…LTLW, LFGG…GYVF, KLTL…EIVW, and FKVW…MPLI.

The protein belongs to the YciB family.

It localises to the cell inner membrane. Its function is as follows. Plays a role in cell envelope biogenesis, maintenance of cell envelope integrity and membrane homeostasis. The sequence is that of Inner membrane-spanning protein YciB from Brucella abortus (strain S19).